We begin with the raw amino-acid sequence, 526 residues long: Light-independent protochlorophyllide reductase subunit B (526 aa).

Position 36 (aspartate 36) interacts with [4Fe-4S] cluster. Aspartate 290 functions as the Proton donor in the catalytic mechanism. 425–426 (GL) contacts substrate.

This sequence belongs to the ChlB/BchB/BchZ family. Protochlorophyllide reductase is composed of three subunits; ChlL, ChlN and ChlB. Forms a heterotetramer of two ChlB and two ChlN subunits. Requires [4Fe-4S] cluster as cofactor.

It catalyses the reaction chlorophyllide a + oxidized 2[4Fe-4S]-[ferredoxin] + 2 ADP + 2 phosphate = protochlorophyllide a + reduced 2[4Fe-4S]-[ferredoxin] + 2 ATP + 2 H2O. It functions in the pathway porphyrin-containing compound metabolism; chlorophyll biosynthesis (light-independent). Functionally, component of the dark-operative protochlorophyllide reductase (DPOR) that uses Mg-ATP and reduced ferredoxin to reduce ring D of protochlorophyllide (Pchlide) to form chlorophyllide a (Chlide). This reaction is light-independent. The NB-protein (ChlN-ChlB) is the catalytic component of the complex. The chain is Light-independent protochlorophyllide reductase subunit B from Prochlorococcus marinus (strain MIT 9515).